We begin with the raw amino-acid sequence, 209 residues long: Octanoyltransferase (209 aa).

In terms of domain architecture, BPL/LPL catalytic spans 29 to 209 (EHTPDELWVV…CHQLQPEIDS (181 aa)). Substrate is bound by residues 71–78 (RGGQVTYH), 138–140 (SLG), and 151–153 (GLA). Cysteine 169 serves as the catalytic Acyl-thioester intermediate.

This sequence belongs to the LipB family.

The protein localises to the cytoplasm. The catalysed reaction is octanoyl-[ACP] + L-lysyl-[protein] = N(6)-octanoyl-L-lysyl-[protein] + holo-[ACP] + H(+). The protein operates within protein modification; protein lipoylation via endogenous pathway; protein N(6)-(lipoyl)lysine from octanoyl-[acyl-carrier-protein]: step 1/2. Catalyzes the transfer of endogenously produced octanoic acid from octanoyl-acyl-carrier-protein onto the lipoyl domains of lipoate-dependent enzymes. Lipoyl-ACP can also act as a substrate although octanoyl-ACP is likely to be the physiological substrate. This Hydrogenovibrio crunogenus (strain DSM 25203 / XCL-2) (Thiomicrospira crunogena) protein is Octanoyltransferase.